Reading from the N-terminus, the 200-residue chain is Pyridoxal 5'-phosphate synthase subunit PdxT (200 aa).

52-54 (GES) provides a ligand contact to L-glutamine. Cys-84 functions as the Nucleophile in the catalytic mechanism. Residues Arg-116 and 145-146 (IR) contribute to the L-glutamine site. Residues His-181 and Glu-183 each act as charge relay system in the active site.

This sequence belongs to the glutaminase PdxT/SNO family. As to quaternary structure, in the presence of PdxS, forms a dodecamer of heterodimers. Only shows activity in the heterodimer.

The catalysed reaction is aldehydo-D-ribose 5-phosphate + D-glyceraldehyde 3-phosphate + L-glutamine = pyridoxal 5'-phosphate + L-glutamate + phosphate + 3 H2O + H(+). The enzyme catalyses L-glutamine + H2O = L-glutamate + NH4(+). The protein operates within cofactor biosynthesis; pyridoxal 5'-phosphate biosynthesis. Functionally, catalyzes the hydrolysis of glutamine to glutamate and ammonia as part of the biosynthesis of pyridoxal 5'-phosphate. The resulting ammonia molecule is channeled to the active site of PdxS. The sequence is that of Pyridoxal 5'-phosphate synthase subunit PdxT from Saccharolobus islandicus (strain M.16.27) (Sulfolobus islandicus).